The primary structure comprises 829 residues: Periplasmic nitrate reductase (829 aa).

The tat-type signal signal peptide spans 1–29 (MKMTRRAFVKANAAASAAAVAGVTLPATA). Positions 41–97 (ITWDKAPCRFCGTGCSVLVGTQNGKVVATQGDPEAPVNKGLNCIKGYFLSKIMYGKD) constitute a 4Fe-4S Mo/W bis-MGD-type domain. Residues C48, C51, C55, and C83 each contribute to the [4Fe-4S] cluster site. Residues K85, Q152, N177, C181, 214-221 (WGSNMAEM), 245-249 (STYYH), 264-266 (QSD), M374, Q378, N484, 510-511 (SD), K533, D560, and 718-727 (TGRVLEHWHT) each bind Mo-bis(molybdopterin guanine dinucleotide). Substrate is bound at residue F794. N802 and K819 together coordinate Mo-bis(molybdopterin guanine dinucleotide).

Belongs to the prokaryotic molybdopterin-containing oxidoreductase family. NasA/NapA/NarB subfamily. Component of the periplasmic nitrate reductase NapAB complex composed of NapA and NapB. [4Fe-4S] cluster is required as a cofactor. Requires Mo-bis(molybdopterin guanine dinucleotide) as cofactor. Predicted to be exported by the Tat system. The position of the signal peptide cleavage has not been experimentally proven.

Its subcellular location is the periplasm. It catalyses the reaction 2 Fe(II)-[cytochrome] + nitrate + 2 H(+) = 2 Fe(III)-[cytochrome] + nitrite + H2O. Catalytic subunit of the periplasmic nitrate reductase complex NapAB. Receives electrons from NapB and catalyzes the reduction of nitrate to nitrite. This chain is Periplasmic nitrate reductase, found in Vibrio atlanticus (strain LGP32) (Vibrio splendidus (strain Mel32)).